The sequence spans 550 residues: Amino acid transporter AVT1C (550 aa).

The segment covering 1 to 11 (MNHVPSDQSFY) has biased composition (polar residues). Disordered stretches follow at residues 1-44 (MNHV…ENQA) and 128-148 (QGLLSPIPSRRGSMRKDEKSS). The span at 20-34 (RKDYVEEDGGSHSDS) shows a compositional bias: basic and acidic residues. The next 11 helical transmembrane spans lie at 165-185 (AVLNGLNVLCGVGILSTPYAA), 190-210 (WLGLMILFVYGLLSFYTGILL), 237-257 (IFVSIVLYLELYACCVEYIIL), 283-303 (LFALLTTLAVLPTVWLRDLSV), 307-327 (ISAGGVIASVLVVLCLFWIGL), 342-362 (LSTLPVAIGLYGYCYSGHAVF), 377-397 (AVLLTCFGICTLMYAGVAVMG), 422-442 (IAVWTTVVNPFTKYALTISPV), 462-484 (IGIRTLLVFSTLLVGLAIPFFGL), 488-510 (LIGSLLTMLVTLILPPACFLSIV), and 521-541 (LCVLIIIVGAISSVIGSYSAL).

Belongs to the amino acid/polyamine transporter 2 family. Amino acid/auxin permease (AAAP) (TC 2.A.18.5) subfamily.

Its subcellular location is the membrane. The sequence is that of Amino acid transporter AVT1C from Arabidopsis thaliana (Mouse-ear cress).